Here is a 605-residue protein sequence, read N- to C-terminus: Tungsten-containing aldehyde ferredoxin oxidoreductase (605 aa).

Tungstopterin contacts are provided by R76, N93, G95, R182, A183, G185, and R186. Positions 288, 291, and 295 each coordinate [4Fe-4S] cluster. 7 residues coordinate tungstopterin: D338, L342, D343, R444, K450, D489, and L493. C494 provides a ligand contact to [4Fe-4S] cluster. L495 is a binding site for tungstopterin.

Belongs to the AOR/FOR family. In terms of assembly, monomer. Homodimer. Requires [4Fe-4S] cluster as cofactor. Tungstopterin serves as cofactor.

The catalysed reaction is an aldehyde + 2 oxidized [2Fe-2S]-[ferredoxin] + H2O = a carboxylate + 2 reduced [2Fe-2S]-[ferredoxin] + 3 H(+). Inhibited by arsenite, iodoacetate and cyanide. Functionally, aldehyde ferredoxin oxidoreductase with a broad substrate specificity. Catalyzes the oxidation of a range of aliphatic aldehydes to their corresponding carboxylic acids. In vitro can use crotonaldehyde, acetaldehyde, formaldehyde, butyraldehyde or glyceraldehyde as substrate, using methyl viologen or ferredoxin, but not NAD(P), as the electron acceptor. Does not oxidize glucose or glyceraldehyde 3-phosphate. May be involved in a pyroglycolytic pathway. The protein is Tungsten-containing aldehyde ferredoxin oxidoreductase of Pyrococcus furiosus (strain ATCC 43587 / DSM 3638 / JCM 8422 / Vc1).